The sequence spans 505 residues: Maturase K (505 aa).

Belongs to the intron maturase 2 family. MatK subfamily.

Its subcellular location is the plastid. It localises to the chloroplast. In terms of biological role, usually encoded in the trnK tRNA gene intron. Probably assists in splicing its own and other chloroplast group II introns. The sequence is that of Maturase K from Kunzea capitata (Pink kunzea).